The following is a 462-amino-acid chain: UDP-N-acetylmuramate--L-alanine ligase (462 aa).

Residue 114–120 (GSHGKTT) coordinates ATP.

This sequence belongs to the MurCDEF family.

Its subcellular location is the cytoplasm. It catalyses the reaction UDP-N-acetyl-alpha-D-muramate + L-alanine + ATP = UDP-N-acetyl-alpha-D-muramoyl-L-alanine + ADP + phosphate + H(+). Its pathway is cell wall biogenesis; peptidoglycan biosynthesis. Functionally, cell wall formation. The protein is UDP-N-acetylmuramate--L-alanine ligase of Brachyspira hyodysenteriae (strain ATCC 49526 / WA1).